A 63-amino-acid polypeptide reads, in one-letter code: 2-hydroxymuconate tautomerase (63 aa).

Residue proline 2 is the Proton acceptor; via imino nitrogen of the active site.

It belongs to the 4-oxalocrotonate tautomerase family. As to quaternary structure, homohexamer.

The enzyme catalyses (2Z,4E)-2-hydroxyhexa-2,4-dienedioate = (3E)-2-oxohex-3-enedioate. It functions in the pathway xenobiotic degradation; toluene degradation. Its pathway is xenobiotic degradation; xylene degradation. Its function is as follows. Catalyzes the ketonization of 2-hydroxymuconate stereoselectively to yield 2-oxo-3-hexenedioate. The chain is 2-hydroxymuconate tautomerase (xylH) from Pseudomonas putida (Arthrobacter siderocapsulatus).